Consider the following 1299-residue polypeptide: Nuclear factor related to kappa-B-binding protein (1299 aa).

The DEUBAD domain maps to 39–156 (PEDLLEDPEI…LKQILASRSD (118 aa)). 2 disordered regions span residues 163–187 (RSGPALPFRQKRPSPSRTPEEREWR) and 204–232 (GDTALSSDEEDLSSWLPSSPARSPSPAVP). Residues 216–232 (SSWLPSSPARSPSPAVP) show a composition bias toward low complexity. Residues serine 228 and serine 298 each carry the phosphoserine modification. Lysine 327 is covalently cross-linked (Glycyl lysine isopeptide (Lys-Gly) (interchain with G-Cter in SUMO2)). Serine 351 is modified (phosphoserine). Residues 370–495 (LGINEISSSF…FCKQENEDSS (126 aa)) form a winged-helix like domain region. Residue lysine 469 forms a Glycyl lysine isopeptide (Lys-Gly) (interchain with G-Cter in SUMO2) linkage. Lysine 488 is covalently cross-linked (Glycyl lysine isopeptide (Lys-Gly) (interchain with G-Cter in SUMO1); alternate). Residue lysine 488 forms a Glycyl lysine isopeptide (Lys-Gly) (interchain with G-Cter in SUMO2); alternate linkage. Disordered stretches follow at residues 669-760 (AAKA…SSSG), 882-902 (LPATASPVSKPATSSPGTSAP), and 1017-1043 (VHAADSPAKASSASAPSSTPTGTTVVK). Low complexity-rich tracts occupy residues 677 to 688 (QQKPKPPSKVKS), 695 to 715 (IKVLSSGPSEQSQMSLSDSSM), and 723 to 733 (VTPTTPALPAI). Residues 744–760 (NKSGPSTVSEPAKSSSG) are compositionally biased toward polar residues. Composition is skewed to low complexity over residues 892 to 902 (PATSSPGTSAP) and 1019 to 1043 (AADSPAKASSASAPSSTPTGTTVVK). Position 1022 is a phosphoserine (serine 1022). N6-acetyllysine is present on lysine 1237. Serine 1291 carries the post-translational modification Phosphoserine.

The protein belongs to the NFRKB family. In terms of assembly, component of the chromatin remodeling INO80 complex; specifically part of a complex module associated with the N-terminus of INO80. Interacts with UCHL5; NFRKB competes with ADRM1 for interaction with UCHL5. Expressed in thymus, brain, testes, spleen and liver.

It is found in the nucleus. Its function is as follows. Binds to the DNA consensus sequence 5'-GGGGAATCTCC-3'. Functionally, putative regulatory component of the chromatin remodeling INO80 complex which is involved in transcriptional regulation, DNA replication and probably DNA repair. Modulates the deubiquitinase activity of UCHL5 in the INO80 complex. This is Nuclear factor related to kappa-B-binding protein (NFRKB) from Homo sapiens (Human).